A 351-amino-acid polypeptide reads, in one-letter code: Hydroxymethylglutaryl-CoA synthase (351 aa).

Glu80 functions as the Proton donor/acceptor in the catalytic mechanism. The Acyl-thioester intermediate role is filled by Cys112. (3S)-3-hydroxy-3-methylglutaryl-CoA-binding residues include Cys112 and Ser153. Arg199 serves as a coordination point for CoA. (3S)-3-hydroxy-3-methylglutaryl-CoA is bound by residues Thr201 and His234. The active-site Proton donor/acceptor is His234. Lys239 is a CoA binding site. Positions 243, 266, and 296 each coordinate (3S)-3-hydroxy-3-methylglutaryl-CoA.

It belongs to the thiolase-like superfamily. Archaeal HMG-CoA synthase family. Interacts with acetoacetyl-CoA thiolase that catalyzes the precedent step in the pathway and with a DUF35 protein. The acetoacetyl-CoA thiolase/HMG-CoA synthase complex channels the intermediate via a fused CoA-binding site, which allows for efficient coupling of the endergonic thiolase reaction with the exergonic HMGCS reaction.

It catalyses the reaction acetoacetyl-CoA + acetyl-CoA + H2O = (3S)-3-hydroxy-3-methylglutaryl-CoA + CoA + H(+). It functions in the pathway metabolic intermediate biosynthesis; (R)-mevalonate biosynthesis; (R)-mevalonate from acetyl-CoA: step 2/3. In terms of biological role, catalyzes the condensation of acetyl-CoA with acetoacetyl-CoA to form 3-hydroxy-3-methylglutaryl-CoA (HMG-CoA). Functions in the mevalonate (MVA) pathway leading to isopentenyl diphosphate (IPP), a key precursor for the biosynthesis of isoprenoid compounds that are building blocks of archaeal membrane lipids. In Thermoplasma acidophilum (strain ATCC 25905 / DSM 1728 / JCM 9062 / NBRC 15155 / AMRC-C165), this protein is Hydroxymethylglutaryl-CoA synthase.